A 570-amino-acid polypeptide reads, in one-letter code: MGLPWCLMSLFFCGILQSHASERCDDWGLDTMRQIQVFEDEPARIKCPLFEHFLKYNYSTAHSSGLTLIWYWTRQDRDLEEPINFRLPENRISKEKDVLWFRPTLLNDTGNYTCMLRNTTYCSKVAFPLEVVQKDSCFNSPMRLPVHRLYIEQGIHNITCPNVDGYFPSSVKPSVTWYKGCTEIVNFHNVQPKGMNLSFFIPLVSNNGNYTCVVTYLENGRLFHLTRTMTVKVVGSPKDAVPPHIYSPNDRVVYEKEPGEELVIPCKVYFSFIMDSHNEIWWTIDGKKPDDVPVDITIIESVSYSSTEDETRTQILSIKKVTPEDLKRNYVCHARNAEGEAEQAAKVKQKVIPPRYTVELACGFGATVFLVVVLIVVYHVYWLEMVLFYRAHFGTDETILDGKEYDIYVSYARNAEEEEFVLLTLRGVLENEFGYKLCIFDRDSFPGGIVTDETLSFIQKSRRLLVVLSPNYVLQGTQALLELKAGLENMASRGNINVILVQYKAVKDLKVKELKRAKSVLTVIKWKGEKSKYPQGRFWKQLQVAMPVKKSPRWSSSDKQGLSYSSLKNV.

The signal sequence occupies residues 1-20; the sequence is MGLPWCLMSLFFCGILQSHA. Ig-like C2-type domains lie at 21–128, 141–230, and 243–348; these read SERC…VAFP, PMRL…RTMT, and PHIY…AKVK. The Extracellular segment spans residues 21–367; that stretch reads SERCDDWGLD…VELACGFGAT (347 aa). 5 cysteine pairs are disulfide-bonded: C24–C122, C47–C114, C137–C181, C160–C212, and C266–C332. An N-linked (GlcNAc...) asparagine glycan is attached at N57. The essential for interaction with PTPRD stretch occupies residues 69 to 85; sequence IWYWTRQDRDLEEPINF. 6 N-linked (GlcNAc...) asparagine glycosylation sites follow: N107, N111, N118, N157, N196, and N209. Residues 368–388 form a helical membrane-spanning segment; sequence VFLVVVLIVVYHVYWLEMVLF. Residues 389–570 lie on the Cytoplasmic side of the membrane; the sequence is YRAHFGTDET…GLSYSSLKNV (182 aa). One can recognise a TIR domain in the interval 403 to 546; the sequence is KEYDIYVSYA…RFWKQLQVAM (144 aa). E482 is an active-site residue. The tract at residues 550 to 570 is disordered; the sequence is KSPRWSSSDKQGLSYSSLKNV. Residues 553 to 570 are compositionally biased toward polar residues; sequence RWSSSDKQGLSYSSLKNV. Residue S557 is modified to Phosphoserine.

Belongs to the interleukin-1 receptor family. The interleukin-36 receptor complex is a heterodimer of IL1RL2 and IL1RAP; the association is inhibited by IL36RN. The interleukin-1 receptor complex is a heterodimer of IL1R1 and IL1RAP. Associates with IL1R2 to form a non-signaling interleukin-1 receptor complex. Interacts with IL-33-bound IL1RL1 to form the minimal interleukin-33 signaling complex with a 1:1:1 stoichiometry. Interacts with KIT (independently of stimulation with KITLG/SCF). A mast cell-specific KITLG/SCF-induced interleukin-33 signaling complex contains IL1RL1, IL1RAP, KIT and MYD88. Interacts (via the first immunoglobilin domain) with PTPRD (via the third immunoglobilin domain); induces pre- and postsynaptic differentiation of neurons. Highly expressed in hypothalamus, in the dentate gyrus of hippocampus, cerebral cortex, cerebellum, liver and lung.

It is found in the membrane. The enzyme catalyses NAD(+) + H2O = ADP-D-ribose + nicotinamide + H(+). Its function is as follows. Coreceptor for IL1RL2 in the IL-36 signaling system. Coreceptor with IL1R1 in the IL-1 signaling system. Associates with IL1R1 bound to IL1B to form the high affinity interleukin-1 receptor complex which mediates interleukin-1-dependent activation of NF-kappa-B and other pathways. Signaling involves the recruitment of adapter molecules such as TOLLIP, MYD88, and IRAK1 or IRAK2 via the respective TIR domains of the receptor/coreceptor subunits. Recruits TOLLIP to the signaling complex. Does not bind to interleukin-1 alone; binding of IL1RN to IL1R1, prevents its association with IL1R1 to form a signaling complex. The cellular response is modulated through a non-signaling association with the membrane IL1R2 decoy receptor. Coreceptor for IL1RL1 in the IL-33 signaling system. Can bidirectionally induce pre- and postsynaptic differentiation of neurons by trans-synaptically binding to PTPRD. May play a role in IL1B-mediated costimulation of IFNG production from T-helper 1 (Th1) cells. The protein is Interleukin-1 receptor accessory protein (Il1rap) of Rattus norvegicus (Rat).